Consider the following 279-residue polypeptide: Large ribosomal subunit protein uL2 (279 aa).

Residues 223 to 279 (VVMNPVDHPHGGGEGRTSGGRHPVSPWGQPTKGYKTRRSARPSDKFIVQKRKRNRNR) form a disordered region. The span at 270 to 279 (VQKRKRNRNR) shows a compositional bias: basic residues.

The protein belongs to the universal ribosomal protein uL2 family. As to quaternary structure, part of the 50S ribosomal subunit. Forms a bridge to the 30S subunit in the 70S ribosome.

In terms of biological role, one of the primary rRNA binding proteins. Required for association of the 30S and 50S subunits to form the 70S ribosome, for tRNA binding and peptide bond formation. It has been suggested to have peptidyltransferase activity; this is somewhat controversial. Makes several contacts with the 16S rRNA in the 70S ribosome. The chain is Large ribosomal subunit protein uL2 from Leptospira borgpetersenii serovar Hardjo-bovis (strain JB197).